The primary structure comprises 137 residues: Nucleoside diphosphate kinase (137 aa).

ATP contacts are provided by lysine 9, phenylalanine 57, arginine 85, threonine 91, and arginine 102. Histidine 119 functions as the Pros-phosphohistidine intermediate in the catalytic mechanism.

It belongs to the NDK family. Homotetramer. Mg(2+) serves as cofactor.

It is found in the cytoplasm. The enzyme catalyses a 2'-deoxyribonucleoside 5'-diphosphate + ATP = a 2'-deoxyribonucleoside 5'-triphosphate + ADP. It catalyses the reaction a ribonucleoside 5'-diphosphate + ATP = a ribonucleoside 5'-triphosphate + ADP. Its function is as follows. Major role in the synthesis of nucleoside triphosphates other than ATP. The ATP gamma phosphate is transferred to the NDP beta phosphate via a ping-pong mechanism, using a phosphorylated active-site intermediate. The sequence is that of Nucleoside diphosphate kinase from Streptococcus thermophilus (strain CNRZ 1066).